A 101-amino-acid polypeptide reads, in one-letter code: Small ribosomal subunit protein uS14 (101 aa).

This sequence belongs to the universal ribosomal protein uS14 family. Part of the 30S ribosomal subunit. Contacts proteins S3 and S10.

Functionally, binds 16S rRNA, required for the assembly of 30S particles and may also be responsible for determining the conformation of the 16S rRNA at the A site. The sequence is that of Small ribosomal subunit protein uS14 from Paraburkholderia phymatum (strain DSM 17167 / CIP 108236 / LMG 21445 / STM815) (Burkholderia phymatum).